The following is a 378-amino-acid chain: Putative glutamate--cysteine ligase 2 (378 aa).

It belongs to the glutamate--cysteine ligase type 2 family. YbdK subfamily.

The enzyme catalyses L-cysteine + L-glutamate + ATP = gamma-L-glutamyl-L-cysteine + ADP + phosphate + H(+). ATP-dependent carboxylate-amine ligase which exhibits weak glutamate--cysteine ligase activity. This chain is Putative glutamate--cysteine ligase 2, found in Bdellovibrio bacteriovorus (strain ATCC 15356 / DSM 50701 / NCIMB 9529 / HD100).